Consider the following 214-residue polypeptide: MPGYSDNIIRNASGLIPMVIEQTSRGERSYDIYSRLLKERIIFLLGEVEDHMANLVVAQLLFLESENPEKDISLYINSPGGVVTAGLAIYDTMQFIKPDVSTLCIGQAASAAALLLCAGAEGKRFCLPNSRVMIHQPLGGYRGQATDIEIHARETLAVRERLNNIMAKHTKKTPDQIMRDTERDNFMSATQAMEYGLIDKVLYDRQVAGHSTDL.

Residue Ser-110 is the Nucleophile of the active site. The active site involves His-135.

Belongs to the peptidase S14 family. Fourteen ClpP subunits assemble into 2 heptameric rings which stack back to back to give a disk-like structure with a central cavity, resembling the structure of eukaryotic proteasomes.

It is found in the cytoplasm. It carries out the reaction Hydrolysis of proteins to small peptides in the presence of ATP and magnesium. alpha-casein is the usual test substrate. In the absence of ATP, only oligopeptides shorter than five residues are hydrolyzed (such as succinyl-Leu-Tyr-|-NHMec, and Leu-Tyr-Leu-|-Tyr-Trp, in which cleavage of the -Tyr-|-Leu- and -Tyr-|-Trp bonds also occurs).. Its function is as follows. Cleaves peptides in various proteins in a process that requires ATP hydrolysis. Has a chymotrypsin-like activity. Plays a major role in the degradation of misfolded proteins. The sequence is that of ATP-dependent Clp protease proteolytic subunit from Legionella pneumophila (strain Paris).